The sequence spans 299 residues: GTPase Era (299 aa).

Residues 4–171 (KSGFVAILGR…VDILSENLDE (168 aa)) enclose the Era-type G domain. A G1 region spans residues 12 to 19 (GRPNVGKS). GTP is bound at residue 12 to 19 (GRPNVGKS). The segment at 38–42 (QTTRN) is G2. The segment at 59 to 62 (DTPG) is G3. Residues 59 to 63 (DTPGI) and 121 to 124 (NKID) contribute to the GTP site. Positions 121 to 124 (NKID) are G4. Residues 150–152 (ISA) are G5. In terms of domain architecture, KH type-2 spans 202 to 280 (TREEIPHSVA…FLETWVKVKK (79 aa)).

It belongs to the TRAFAC class TrmE-Era-EngA-EngB-Septin-like GTPase superfamily. Era GTPase family. In terms of assembly, monomer.

It is found in the cytoplasm. It localises to the cell membrane. An essential GTPase that binds both GDP and GTP, with rapid nucleotide exchange. Plays a role in 16S rRNA processing and 30S ribosomal subunit biogenesis and possibly also in cell cycle regulation and energy metabolism. The polypeptide is GTPase Era (Streptococcus pneumoniae (strain P1031)).